Consider the following 281-residue polypeptide: Homeobox protein Hox-A5 (281 aa).

Disordered stretches follow at residues 65–144 and 162–183; these read VGNE…PCSS and PLEEEKPAGSAPTTPQNVSDST. 2 stretches are compositionally biased toward polar residues: residues 68–99 and 114–127; these read ERTQGYSPSHSAATTPSVEPVRYTQSANSTGT and VASSSPVTETQSQH. The segment covering 132–144 has biased composition (low complexity); it reads NSITTPCSTPCSS. Positions 172–183 are enriched in polar residues; the sequence is APTTPQNVSDST. Residues 187 to 192 carry the Antp-type hexapeptide motif; it reads IYPWMR. The segment at residues 205-264 is a DNA-binding region (homeobox); sequence GKRARTAYTRYQTLELEKEFHFNRYLTRRRRIEIAHALCLSERQIKIWFQNRRMKWKKDN.

The protein belongs to the Antp homeobox family.

Its subcellular location is the nucleus. In terms of biological role, sequence-specific transcription factor which is part of a developmental regulatory system that provides cells with specific positional identities on the anterior-posterior axis. In Morone saxatilis (Striped bass), this protein is Homeobox protein Hox-A5 (hoxa5).